We begin with the raw amino-acid sequence, 975 residues long: SRQVKEQLIKHNIGQRIFGHYVLGLSQGSVSEILARPKPWNKLTVRGKEPFHKMKQFLSDEQNILALRSIQGRQRENPGQSLNRLFQEVPKRRNGSEGNITTRIRASETGSDEAIKSILEQAKRELQVQKTAEPAQPSSTSSSGTSDDAIRSILQQARREMEAQQAALDPALKPAPLSQADLAILSPKLIPSSPMSSVSSYPPLALSLKKPPTAPDTSASTLPNPPALKKESQDAPGLDLPGAAESAQGVLRHVKSELGRSGVWKDHWWSTVQPERKSAAPPEDAKSEEAGGTKEKGGGQGHGPIAASSRDPHHRRSTGRNGPALSPRTPQSSELSLTGASRSETPQNSPLPSSPIVPMSKPAKPSVPPLTPEQYEIYMYQEVDTIELTRQVKEKLAKNGICQRIFGEKVLGLSQGSVSDMLSRPKPWSKLTQKGREPFIRMQLWLNGELGQGVLPVQGQQQGPVLHSVTSLQDPLQQGCVSSESTPKTSASCSPAPESPMSSSESVKSLTELVQQPCPPIETSKDGKPPEPSDPPASDSQPATPLPLSGHSALSIQELVAMSPELDTYGITKRVKEVLTDNNLGQRLFGETILGLTQGSVSDLLSRPKPWHKLSLKGREPFVRMQLWLNDPNNVEKLMDMKRMEKKAYMKRRHSSVSDSQPCEPPSVGIDYSQGASPQPQHQLKKPRVVLAPEEKEALKRAYQQKPYPSPKTIEELATQLNLKTSTVINWFHNYRSRIRRELFIEEIQAGSQGQAGARHSPSARSSGAAPSSEGDSCDGVEAAEGPGAADAEESAPAAAAKSQGGPAEAAVAPEEREEAPRPAEKRSRRPRGPGPGPGRRGGGGPAPGAPAAPAAAARGPSRRPGARAKPRRRRRRRRRHARGGGRRYLSRPARGGPCRARDGAHRSSALPSTSAPAAARRPSSLQSLFGLPEAAGARDSRDNPLRKKKAANLNSIIHRLEKAASREEPIEWEF.

A DNA-binding region (CUT 1) is located at residues 1-73 (SRQVKEQLIK…ILALRSIQGR (73 aa)). 2 disordered regions span residues 90 to 113 (PKRR…GSDE) and 126 to 148 (LQVQ…TSDD). Residues 113 to 169 (EAIKSILEQAKRELQVQKTAEPAQPSSTSSSGTSDDAIRSILQQARREMEAQQAALD) adopt a coiled-coil conformation. The residue at position 207 (Ser-207) is a Phosphoserine. Residues 209–246 (KKPPTAPDTSASTLPNPPALKKESQDAPGLDLPGAAES) are disordered. Glycyl lysine isopeptide (Lys-Gly) (interchain with G-Cter in SUMO2) cross-links involve residues Lys-229, Lys-255, and Lys-286. A compositionally biased stretch (basic and acidic residues) spans 262 to 297 (GVWKDHWWSTVQPERKSAAPPEDAKSEEAGGTKEKG). The segment at 262–369 (GVWKDHWWST…SKPAKPSVPP (108 aa)) is disordered. Residues 328–351 (RTPQSSELSLTGASRSETPQNSPL) are compositionally biased toward polar residues. A Phosphoserine modification is found at Ser-349. The CUT 2 DNA-binding region spans 374–461 (QYEIYMYQEV…QGVLPVQGQQ (88 aa)). Over residues 476 to 489 (LQQGCVSSESTPKT) the composition is skewed to polar residues. The interval 476–549 (LQQGCVSSES…SQPATPLPLS (74 aa)) is disordered. Over residues 490 to 506 (SASCSPAPESPMSSSES) the composition is skewed to low complexity. A phosphoserine mark is found at Ser-499 and Ser-509. A DNA-binding region (CUT 3) is located at residues 557-644 (QELVAMSPEL…VEKLMDMKRM (88 aa)). A disordered region spans residues 652–687 (RRHSSVSDSQPCEPPSVGIDYSQGASPQPQHQLKKP). A DNA-binding region (homeobox) is located at residues 684–743 (LKKPRVVLAPEEKEALKRAYQQKPYPSPKTIEELATQLNLKTSTVINWFHNYRSRIRREL). Ser-710 bears the Phosphoserine mark. Residue Lys-724 forms a Glycyl lysine isopeptide (Lys-Gly) (interchain with G-Cter in SUMO2) linkage. The segment at 752-949 (SQGQAGARHS…DSRDNPLRKK (198 aa)) is disordered. Residues 756–773 (AGARHSPSARSSGAAPSS) show a composition bias toward low complexity. Ser-777 bears the Phosphoserine mark. The span at 780-813 (GVEAAEGPGAADAEESAPAAAAKSQGGPAEAAVA) shows a compositional bias: low complexity. Gly residues predominate over residues 838 to 847 (PGRRGGGGPA). Positions 850–860 (APAAPAAAARG) are enriched in low complexity. The segment covering 861–890 (PSRRPGARAKPRRRRRRRRRHARGGGRRYL) has biased composition (basic residues). Over residues 907 to 929 (RSSALPSTSAPAAARRPSSLQSL) the composition is skewed to low complexity. Ser-925 is subject to Phosphoserine. The span at 937-946 (GARDSRDNPL) shows a compositional bias: basic and acidic residues. Ser-956 and Ser-966 each carry phosphoserine.

Belongs to the CUT homeobox family. Interacts with BANP. In terms of processing, as cells progress into S phase, a fraction of CUX1 molecules is proteolytically processed into N-terminally truncated proteins of 110 kDa by CTSL. Cell cycle-dependent processing of CUX1 serves to generate a CDP/Cux p110 with distinct DNA binding and transcriptional properties. Post-translationally, phosphorylated by PKA. A broad pattern of expression observed in tissues of diverse origins, such as cartilage, liver, brain, lung, heart and skeletal muscle. There are 2 distinct protein species: the larger one (230-250 kDa) is found mainly in adult brain, lung and heart, and the smaller one (180-190 kDa) predominates in early embryonic tissues.

It localises to the nucleus. Transcription factor involved in the control of neuronal differentiation in the brain. Regulates dendrite development and branching, and dendritic spine formation in cortical layers II-III. Also involved in the control of synaptogenesis. In addition, it has probably a broad role in mammalian development as a repressor of developmentally regulated gene expression. May act by preventing binding of positively-activing CCAAT factors to promoters. Component of nf-munr repressor; binds to the matrix attachment regions (MARs) (5' and 3') of the immunoglobulin heavy chain enhancer. Represses T-cell receptor (TCR) beta enhancer function by binding to MARbeta, an ATC-rich DNA sequence located upstream of the TCR beta enhancer. Binds to the TH enhancer; may require the basic helix-loop-helix protein TCF4 as a coactivator. In terms of biological role, plays a role in cell cycle progression, in particular at the G1/S transition. As cells progress into S phase, a fraction of CUX1 molecules is proteolytically processed into N-terminally truncated proteins of 110 kDa. While CUX1 only transiently binds to DNA and carries the CCAAT-displacement activity, CDP/Cux p110 makes a stable interaction with DNA and stimulates expression of genes such as POLA1. The protein is Homeobox protein cut-like 1 (CUX1) of Canis lupus familiaris (Dog).